The sequence spans 113 residues: UPF0060 membrane protein Arth_4423 (113 aa).

4 helical membrane passes run 7–27 (VLLF…VWQA), 33–53 (AWWW…VATL), 62–82 (ILAA…MVFD), and 91–111 (VIGS…PRGT).

Belongs to the UPF0060 family.

Its subcellular location is the cell membrane. The sequence is that of UPF0060 membrane protein Arth_4423 from Arthrobacter sp. (strain FB24).